Reading from the N-terminus, the 138-residue chain is Cysteine desulfuration protein SufE (138 aa).

The active-site Cysteine persulfide intermediate is the cysteine 51.

Belongs to the SufE family. Homodimer. Interacts with SufS.

Its subcellular location is the cytoplasm. It participates in cofactor biosynthesis; iron-sulfur cluster biosynthesis. Functionally, participates in cysteine desulfuration mediated by SufS. Cysteine desulfuration mobilizes sulfur from L-cysteine to yield L-alanine and constitutes an essential step in sulfur metabolism for biosynthesis of a variety of sulfur-containing biomolecules. Functions as a sulfur acceptor for SufS, by mediating the direct transfer of the sulfur atom from the S-sulfanylcysteine of SufS, an intermediate product of cysteine desulfuration process. This is Cysteine desulfuration protein SufE from Cronobacter sakazakii (strain ATCC BAA-894) (Enterobacter sakazakii).